The primary structure comprises 128 residues: Protein BEX2 (128 aa).

Arginine 50 is modified (omega-N-methylarginine). Positions 107–128 (SLRAVSTDPPHHDHHDEFCLMP) are disordered. The segment covering 115-128 (PPHHDHHDEFCLMP) has biased composition (basic and acidic residues). Residues 117–121 (HHDHH) are his cluster. Cysteine 125 is a Zn(2+) binding site.

This sequence belongs to the BEX family. In terms of assembly, interacts with LMO2, possibly leading to regulate the transcriptional activity of a DNA-binding complex containing LMO2. Interacts with OMP. In terms of tissue distribution, expressed in central nervous system, with high level in pituitary, cerebellum and temporal lobe. Widely expressed in breast cancer cell lines.

It localises to the cytoplasm. The protein localises to the nucleus. Functionally, regulator of mitochondrial apoptosis and G1 cell cycle in breast cancer. Protects the breast cancer cells against mitochondrial apoptosis and this effect is mediated through the modulation of BCL2 protein family, which involves the positive regulation of anti-apoptotic member BCL2 and the negative regulation of pro-apoptotic members BAD, BAK1 and PUMA. Required for the normal cell cycle progression during G1 in breast cancer cells through the regulation of CCND1 and CDKN1A. Regulates the level of PP2A regulatory subunit B and PP2A phosphatase activity. In absence of reductive stress, acts as a pseudosubstrate for the CRL2(FEM1B) complex: associates with FEM1B via zinc, thereby preventing association between FEM1B and its substrates. The polypeptide is Protein BEX2 (BEX2) (Homo sapiens (Human)).